The following is a 222-amino-acid chain: Ornithine decarboxylase antizyme 1 (222 aa).

Belongs to the ODC antizyme family. In terms of assembly, interacts with ODC1 and thereby sterically blocks ODC homodimerization. Forms a ternary complex with PSMB4 and OAZ1 before PSMB4 is incorporated into the 20S proteasome. Interacts with AZIN2; this interaction disrupts the interaction between the antizyme and ODC1. Interacts with FAM171A1.

In terms of biological role, ornithine decarboxylase (ODC) antizyme protein that negatively regulates ODC activity and intracellular polyamine biosynthesis and uptake in response to increased intracellular polyamine levels. Binds to ODC monomers, inhibiting the assembly of the functional ODC homodimer, and targets the monomers for ubiquitin-independent proteolytic destruction by the 26S proteasome. Triggers ODC degradation by inducing the exposure of a cryptic proteasome-interacting surface of ODC. Stabilizes AZIN2 by interfering with its ubiquitination. Also inhibits cellular uptake of polyamines by inactivating the polyamine uptake transporter. SMAD1/OAZ1/PSMB4 complex mediates the degradation of the CREBBP/EP300 repressor SNIP1. Involved in the translocation of AZIN2 from ER-Golgi intermediate compartment (ERGIC) to the cytosol. This Mesocricetus auratus (Golden hamster) protein is Ornithine decarboxylase antizyme 1 (OAZ1).